The following is a 123-amino-acid chain: Large ribosomal subunit protein uL14 (123 aa).

Belongs to the universal ribosomal protein uL14 family. As to quaternary structure, part of the 50S ribosomal subunit. Forms a cluster with proteins L3 and L19. In the 70S ribosome, L14 and L19 interact and together make contacts with the 16S rRNA in bridges B5 and B8.

In terms of biological role, binds to 23S rRNA. Forms part of two intersubunit bridges in the 70S ribosome. The polypeptide is Large ribosomal subunit protein uL14 (Corynebacterium jeikeium (strain K411)).